Here is a 469-residue protein sequence, read N- to C-terminus: GTPase Der (469 aa).

EngA-type G domains lie at 3 to 167 (PTVA…PDEV) and 175 to 348 (PKFA…RAAM). GTP-binding positions include 9-16 (GRPNVGKS), 56-60 (DTGGF), 119-122 (NKAE), 181-188 (GRPNVGKS), 228-232 (DTAGV), and 293-296 (NKWD). The 85-residue stretch at 349–433 (SKLATPKLTR…PLRVQYKSSE (85 aa)) folds into the KH-like domain. The tract at residues 429–469 (YKSSENPFDNDEKDKPRAKPKPMSKMRGREKEVRYGKNSKK) is disordered.

It belongs to the TRAFAC class TrmE-Era-EngA-EngB-Septin-like GTPase superfamily. EngA (Der) GTPase family. As to quaternary structure, associates with the 50S ribosomal subunit.

In terms of biological role, GTPase that plays an essential role in the late steps of ribosome biogenesis. The chain is GTPase Der from Chromobacterium violaceum (strain ATCC 12472 / DSM 30191 / JCM 1249 / CCUG 213 / NBRC 12614 / NCIMB 9131 / NCTC 9757 / MK).